Reading from the N-terminus, the 3507-residue chain is Dynein axonemal heavy chain 14 (3507 aa).

A disordered region spans residues Pro-91–Gly-126. The stretch at Asp-354–Glu-381 forms a coiled coil. The short motif at Gly-1164–Thr-1171 is the GPAGTGKT motif element. ATP is bound by residues Gly-1164–Thr-1171 and Gly-1427–Thr-1434. Asn-1818 carries N-linked (GlcNAc...) asparagine glycosylation.

This sequence belongs to the dynein heavy chain family. Consists of at least two heavy chains and a number of intermediate and light chains.

It is found in the cytoplasm. It localises to the cytoskeleton. The protein resides in the cilium axoneme. Force generating protein of respiratory cilia. Produces force towards the minus ends of microtubules. Dynein has ATPase activity; the force-producing power stroke is thought to occur on release of ADP. Involved in sperm motility; implicated in sperm flagellar assembly. In Homo sapiens (Human), this protein is Dynein axonemal heavy chain 14 (DNAH14).